Here is a 372-residue protein sequence, read N- to C-terminus: 4-hydroxy-3-methylbut-2-en-1-yl diphosphate synthase (flavodoxin) (372 aa).

[4Fe-4S] cluster contacts are provided by Cys270, Cys273, Cys305, and Glu312.

It belongs to the IspG family. Requires [4Fe-4S] cluster as cofactor.

The catalysed reaction is (2E)-4-hydroxy-3-methylbut-2-enyl diphosphate + oxidized [flavodoxin] + H2O + 2 H(+) = 2-C-methyl-D-erythritol 2,4-cyclic diphosphate + reduced [flavodoxin]. The protein operates within isoprenoid biosynthesis; isopentenyl diphosphate biosynthesis via DXP pathway; isopentenyl diphosphate from 1-deoxy-D-xylulose 5-phosphate: step 5/6. In terms of biological role, converts 2C-methyl-D-erythritol 2,4-cyclodiphosphate (ME-2,4cPP) into 1-hydroxy-2-methyl-2-(E)-butenyl 4-diphosphate. This is 4-hydroxy-3-methylbut-2-en-1-yl diphosphate synthase (flavodoxin) from Vibrio parahaemolyticus serotype O3:K6 (strain RIMD 2210633).